The sequence spans 385 residues: Methionyl-tRNA formyltransferase, mitochondrial (385 aa).

Belongs to the Fmt family.

Its subcellular location is the mitochondrion. It catalyses the reaction L-methionyl-tRNA(fMet) + (6R)-10-formyltetrahydrofolate = N-formyl-L-methionyl-tRNA(fMet) + (6S)-5,6,7,8-tetrahydrofolate + H(+). Its function is as follows. Methionyl-tRNA formyltransferase that formylates methionyl-tRNA in mitochondria and is crucial for translation initiation. In Rattus norvegicus (Rat), this protein is Methionyl-tRNA formyltransferase, mitochondrial (Mtfmt).